Reading from the N-terminus, the 368-residue chain is Endophilin-A2 (368 aa).

Residues 1–21 (MSVAGLKKQFYKASQLVSEKV) form a membrane-binding amphipathic helix region. The region spanning 18-249 (SEKVGGAEGT…LKRRVREASS (232 aa)) is the BAR domain. Residues 60-87 (PNPASRAKLTMLNTVSKIRGQVKNPGYP) form a required for dimerization upon membrane association region. A coiled-coil region spans residues 180-250 (DEELRQALEK…KRRVREASSR (71 aa)). Positions 218–254 (LVDAQLDYHRQAVQILEELADKLKRRVREASSRPRRE) are interaction with ARC. The tract at residues 243–309 (RVREASSRPR…SKSMPPLDQP (67 aa)) is disordered. Residues 245 to 261 (REASSRPRREFKPRPQE) show a composition bias toward basic and acidic residues. S288 carries the phosphoserine modification. Phosphothreonine is present on T298. An SH3 domain is found at 306-365 (LDQPSCKALYDFEPENDGELGFREGDLITLTNQIDENWYEGMLHGQSGFFPLSYVQVLVP). At Y315 the chain carries Phosphotyrosine.

Belongs to the endophilin family. In terms of assembly, interacts with ARC, SYNJ1 and DNM1. Interacts with PDCD6IP. Interacts with BIN2. As to expression, detected in brain and testis (at protein level). Ubiquitous.

It localises to the cytoplasm. It is found in the early endosome membrane. The protein localises to the cell projection. The protein resides in the podosome. Its function is as follows. Implicated in endocytosis. May recruit other proteins to membranes with high curvature. The sequence is that of Endophilin-A2 (Sh3gl1) from Rattus norvegicus (Rat).